Reading from the N-terminus, the 432-residue chain is Adenylosuccinate synthetase 2 (432 aa).

GTP is bound by residues 12–18 (GDEGKGR) and 40–42 (GHT). The Proton acceptor role is filled by D13. The Mg(2+) site is built by D13 and G40. IMP is bound by residues 13 to 16 (DEGK), 38 to 41 (NAGH), T128, R142, Q222, T237, and R301. Residue H41 is the Proton donor of the active site. Position 297–303 (297–303 (VNTGRPR)) interacts with substrate. GTP is bound by residues R303, 329–331 (KLD), and 411–413 (TTG).

The protein belongs to the adenylosuccinate synthetase family. As to quaternary structure, homodimer. The cofactor is Mg(2+).

Its subcellular location is the cytoplasm. The catalysed reaction is IMP + L-aspartate + GTP = N(6)-(1,2-dicarboxyethyl)-AMP + GDP + phosphate + 2 H(+). Its pathway is purine metabolism; AMP biosynthesis via de novo pathway; AMP from IMP: step 1/2. In terms of biological role, plays an important role in the de novo pathway of purine nucleotide biosynthesis. Catalyzes the first committed step in the biosynthesis of AMP from IMP. In Burkholderia lata (strain ATCC 17760 / DSM 23089 / LMG 22485 / NCIMB 9086 / R18194 / 383), this protein is Adenylosuccinate synthetase 2.